The primary structure comprises 103 residues: Large ribosomal subunit protein bL21 (103 aa).

Belongs to the bacterial ribosomal protein bL21 family. In terms of assembly, part of the 50S ribosomal subunit. Contacts protein L20.

Functionally, this protein binds to 23S rRNA in the presence of protein L20. The sequence is that of Large ribosomal subunit protein bL21 from Actinobacillus succinogenes (strain ATCC 55618 / DSM 22257 / CCUG 43843 / 130Z).